A 494-amino-acid chain; its full sequence is MVLTKTATNDESVCTMFGSRYVRTTLPKYEIGENSIPKDAAYQIIKDELMLDGNPRLNLASFVTTWMEPECDKLIMDSINKNYVDMDEYPVTTELQNRCVNIIARLFNAPLEESETAVGVGTVGSSEAIMLAGLAFKRKWQNKRKAEGKPYDKPNIVTGANVQVCWEKFARYFEVELKEVNLSEGYYVMDPDKAAEMVDENTICVAAILGSTLNGEFEDVKRLNDLLVKKNEETGWNTPIHVDAASGGFIAPFIYPELEWDFRLPLVKSINVSGHKYGLVYAGIGWVVWRAAEDLPEELIFHINYLGADQPTFTLNFSKGSSQIIAQYYQLIRLGFEGYKNVMENCIENMVVLKEGIEKTERFNIVSKDQGVPVVAFSLKDHSFHNEFEISEMLRRFGWIVPAYTMPADAQHITVLRVVIREDFSRTLAERLVADISKVLHELDTLPSKISKKMGIEGIAENVKEKKMEKEILMEVIVGWRKFVKERKKMNGVC.

K276 is modified (N6-(pyridoxal phosphate)lysine). Residues V463–C494 form a calmodulin-binding region.

This sequence belongs to the group II decarboxylase family. In terms of assembly, homohexamer. Interacts with calmodulin. It depends on pyridoxal 5'-phosphate as a cofactor. Expressed in roots, inflorescence stems, flowers, siliques and leaves.

It catalyses the reaction L-glutamate + H(+) = 4-aminobutanoate + CO2. Up-regulated by calmodulin binding at physiological pH. Its function is as follows. Catalyzes the conversion of glutamate to 4-aminobutanoate (GABA). The calmodulin-binding is calcium-dependent and it is proposed to directly or indirectly form a calcium regulated control of GABA biosynthesis. This Arabidopsis thaliana (Mouse-ear cress) protein is Glutamate decarboxylase 2 (GAD2).